A 377-amino-acid polypeptide reads, in one-letter code: MKFVDEATIEVIAGKGGNGVASFRREKFIPKGGPDGGDGGRGGSIYAVADRNINTLIDFRYARLHRAKNGENGRGSDQYGAAAPDITLRVPVGTVVHDADTGEVLFDLDRHDQKVTLAAGGAGGMGNIHFKSSTNRAPRQWTPGKEGEQRRLRMELKVLADVGLLGLPNAGKSTLISRISNARPKIADYPFTTLHPNLGVVRTSPSRSFVVADIPGLIEGASEGAGLGHLFLRHLARTRVLLHLVDISSPDPEADPIEQAVVDANAIVEELRRYDPELAAKPRWLVLNKLDMVPDAQDAQQRFCAEFGWTGPVFAISGLNGEGTQDLIWALQDYLDAEKRKDQDAQDQADGTYVFEDPRFDASRGGAAPATPPGGDE.

The Obg domain maps to 1–159 (MKFVDEATIE…RRLRMELKVL (159 aa)). Residues 127–148 (NIHFKSSTNRAPRQWTPGKEGE) form a disordered region. The 177-residue stretch at 160–336 (ADVGLLGLPN…LIWALQDYLD (177 aa)) folds into the OBG-type G domain. Residues 166-173 (GLPNAGKS), 191-195 (FTTLH), 213-216 (DIPG), 288-291 (NKLD), and 317-319 (SGL) contribute to the GTP site. Residues Ser173 and Thr193 each coordinate Mg(2+). The tract at residues 339–377 (KRKDQDAQDQADGTYVFEDPRFDASRGGAAPATPPGGDE) is disordered.

The protein belongs to the TRAFAC class OBG-HflX-like GTPase superfamily. OBG GTPase family. In terms of assembly, monomer. The cofactor is Mg(2+).

It localises to the cytoplasm. Functionally, an essential GTPase which binds GTP, GDP and possibly (p)ppGpp with moderate affinity, with high nucleotide exchange rates and a fairly low GTP hydrolysis rate. Plays a role in control of the cell cycle, stress response, ribosome biogenesis and in those bacteria that undergo differentiation, in morphogenesis control. In Bordetella bronchiseptica (strain ATCC BAA-588 / NCTC 13252 / RB50) (Alcaligenes bronchisepticus), this protein is GTPase Obg.